We begin with the raw amino-acid sequence, 138 residues long: Rubber elongation factor protein (138 aa).

Alanine 2 carries the N-acetylalanine modification.

Belongs to the REF/SRPP family. In solution, able to form amyloid fibers and aggregates rich in beta-sheets. Interaction with membrane stabilizes the protein, inhibiting the amyloid state and aggregation. Not glycosylated. In terms of tissue distribution, localized in all laticifer layers.

It localises to the cytoplasm. Its function is as follows. May be part of the rubber biosynthesis machinery. Plays a role in rubber elongation. The polypeptide is Rubber elongation factor protein (Hevea brasiliensis (Para rubber tree)).